The sequence spans 753 residues: Catalase-peroxidase (753 aa).

Residues 1 to 39 form the signal peptide; sequence MLPRVNKRSNCIAKKTSNRLISAVSLAIASLCISQSALA. The tryptophyl-tyrosyl-methioninium (Trp-Tyr) (with M-267) cross-link spans 118 to 241; it reads WHSTGTYRMS…LAAVQMGLIY (124 aa). Histidine 119 (proton acceptor) is an active-site residue. The tryptophyl-tyrosyl-methioninium (Tyr-Met) (with W-118) cross-link spans 241-267; sequence YVNPEGPNGNHDPISAAADIRDVFARM. Histidine 282 provides a ligand contact to heme b.

This sequence belongs to the peroxidase family. Peroxidase/catalase subfamily. As to quaternary structure, homodimer or homotetramer. Heme b serves as cofactor. Post-translationally, formation of the three residue Trp-Tyr-Met cross-link is important for the catalase, but not the peroxidase activity of the enzyme.

The enzyme catalyses H2O2 + AH2 = A + 2 H2O. The catalysed reaction is 2 H2O2 = O2 + 2 H2O. In terms of biological role, bifunctional enzyme with both catalase and broad-spectrum peroxidase activity. This Pseudoalteromonas atlantica (strain T6c / ATCC BAA-1087) protein is Catalase-peroxidase.